The following is a 338-amino-acid chain: 1-aminocyclopropane-1-carboxylate deaminase (338 aa).

Position 51 is an N6-(pyridoxal phosphate)lysine (lysine 51). Serine 78 acts as the Nucleophile in catalysis.

The protein belongs to the ACC deaminase/D-cysteine desulfhydrase family. Homotrimer. Pyridoxal 5'-phosphate serves as cofactor.

The enzyme catalyses 1-aminocyclopropane-1-carboxylate + H2O = 2-oxobutanoate + NH4(+). In terms of biological role, catalyzes a cyclopropane ring-opening reaction, the irreversible conversion of 1-aminocyclopropane-1-carboxylate (ACC) to ammonia and alpha-ketobutyrate. Allows growth on ACC as a nitrogen source. The chain is 1-aminocyclopropane-1-carboxylate deaminase from Paraburkholderia xenovorans (strain LB400).